The primary structure comprises 843 residues: Eisosome protein 1 (843 aa).

The segment at 1 to 53 (MSLISAVEDRDIHNIGKTSGGGSRTSSITSSKKSLKHGSKSLRKPKVYQTTGE) is disordered. At Ser2 the chain carries N-acetylserine. Ser2 bears the Phosphoserine mark. Positions 33–46 (KSLKHGSKSLRKPK) are enriched in basic residues. Phosphoserine is present on residues Ser88 and Ser130. The segment at 120–174 (KMGPKVVRNNSITSATSKTSKESQTKRKSKESPGAAASKAYSMTMETTSLSSQTN) is disordered. Composition is skewed to polar residues over residues 127–137 (RNNSITSATSK) and 163–174 (TMETTSLSSQTN). A phosphoserine mark is found at Ser182, Ser401, Ser584, and Ser710. Residues 718-843 (LPTQLEKIEE…QDAISNQEKK (126 aa)) form a disordered region. A Phosphothreonine modification is found at Thr720. Ser763 and Ser775 each carry phosphoserine. Positions 781–797 (SGKEDANDCESAEHSKE) are enriched in basic and acidic residues. A compositionally biased stretch (polar residues) spans 798–810 (ISVSQKAGNNKSL). Residues Ser816, Ser828, Ser829, and Ser838 each carry the phosphoserine modification.

Belongs to the EIS1 family.

The protein localises to the cytoplasmic granule. The protein resides in the cell membrane. Functionally, required for normal formation of eisosomes, large cytoplasmic protein assemblies that localize to specialized domains on plasma membrane and mark the site of endocytosis. This Saccharomyces cerevisiae (strain YJM789) (Baker's yeast) protein is Eisosome protein 1 (EIS1).